The chain runs to 609 residues: UvrABC system protein C (609 aa).

The region spanning 16 to 94 (SSPGVYRMYD…IKQYMPKYNV (79 aa)) is the GIY-YIG domain. Positions 203-238 (HQVMSVLVGKMEQAASDMRYEQAALYRDQITALRRV) constitute a UVR domain.

This sequence belongs to the UvrC family. As to quaternary structure, interacts with UvrB in an incision complex.

The protein localises to the cytoplasm. Functionally, the UvrABC repair system catalyzes the recognition and processing of DNA lesions. UvrC both incises the 5' and 3' sides of the lesion. The N-terminal half is responsible for the 3' incision and the C-terminal half is responsible for the 5' incision. The sequence is that of UvrABC system protein C from Shewanella halifaxensis (strain HAW-EB4).